The chain runs to 217 residues: Trichothecene biosynthesis transcription regulator TRI6 (217 aa).

The C2H2-type zinc finger occupies Val185–His215.

The protein localises to the nucleus. Its function is as follows. Transcriptional activator of part of the core trichothecene biosynthesis cluster. The polypeptide is Trichothecene biosynthesis transcription regulator TRI6 (Fusarium sporotrichioides).